A 205-amino-acid chain; its full sequence is Outer-membrane lipoprotein carrier protein (205 aa).

Residues 1 to 19 form the signal peptide; the sequence is MKKIIICFIFVFSINVSFA.

It belongs to the LolA family. As to quaternary structure, monomer.

It localises to the periplasm. Its function is as follows. Participates in the translocation of lipoproteins from the inner membrane to the outer membrane. Only forms a complex with a lipoprotein if the residue after the N-terminal Cys is not an aspartate (The Asp acts as a targeting signal to indicate that the lipoprotein should stay in the inner membrane). The polypeptide is Outer-membrane lipoprotein carrier protein (Francisella tularensis subsp. holarctica (strain LVS)).